The chain runs to 260 residues: Scytalidopepsin B (260 aa).

The signal sequence occupies residues 1 to 20 (MKFTTAAVLSALVSAEIAFA). A propeptide spanning residues 21–54 (APGGNGFARRQARRQARAAGLKASPFRQVNAKEA) is cleaved from the precursor. Cysteines 101 and 181 form a disulfide. Catalysis depends on Glu-190, which acts as the Proton acceptor. Disulfide bonds link Cys-195/Cys-219 and Cys-248/Cys-257.

Belongs to the peptidase G1 family. As to quaternary structure, monomer.

The catalysed reaction is Hydrolysis of proteins with broad specificity, cleaving 24-Phe-|-Phe-25, but not 15-Leu-|-Tyr-16 and 25-Phe-|-Tyr-26 in the B chain of insulin.. In Scytalidium lignicola (Hyphomycete), this protein is Scytalidopepsin B.